The chain runs to 432 residues: Neuronal pentraxin-1 (432 aa).

The signal sequence occupies residues 1-22 (MLAGRAARTCALLALCLLGSGA). The segment at 88 to 122 (RCESQSTLDSGPGEARSGGGRKQPGSGKNTMGDLS) is disordered. N-linked (GlcNAc...) asparagine glycosylation is found at asparagine 154 and asparagine 193. Positions 226 to 428 (DKFQLTFPLR…GATKWTFEAC (203 aa)) constitute a Pentraxin (PTX) domain. Cysteines 256 and 316 form a disulfide. Residues asparagine 280, glutamate 358, glutamine 359, aspartate 360, and glutamine 370 each contribute to the Ca(2+) site.

In terms of assembly, homooligomer or heterooligomer (probably pentamer) with neuronal pentraxin receptor (NPTXR). It depends on Ca(2+) as a cofactor. As to expression, expressed in brain and kidney.

The protein localises to the secreted. The protein resides in the cytoplasmic vesicle. It is found in the secretory vesicle. Its subcellular location is the endoplasmic reticulum. Functionally, may be involved in mediating uptake of synaptic material during synapse remodeling or in mediating the synaptic clustering of AMPA glutamate receptors at a subset of excitatory synapses. In Mus musculus (Mouse), this protein is Neuronal pentraxin-1 (Nptx1).